The sequence spans 90 residues: Small ribosomal subunit protein uS15c (90 aa).

The protein belongs to the universal ribosomal protein uS15 family. In terms of assembly, part of the 30S ribosomal subunit.

It is found in the plastid. It localises to the chloroplast. The polypeptide is Small ribosomal subunit protein uS15c (rps15) (Mesostigma viride (Green alga)).